The following is a 513-amino-acid chain: Activin receptor type-2A (513 aa).

A signal peptide spans 1–19 (MGAAAKLAFAVFLISCSSG). Topologically, residues 20–135 (AILGRSETQE…TSNPVTPKPP (116 aa)) are extracellular. Cystine bridges form between cysteine 30–cysteine 60, cysteine 50–cysteine 78, cysteine 85–cysteine 104, cysteine 91–cysteine 103, and cysteine 105–cysteine 110. Asparagine 43 and asparagine 66 each carry an N-linked (GlcNAc...) asparagine glycan. The helical transmembrane segment at 136 to 161 (YYNILLYSLVPLMLIAGIVICAFWVY) threads the bilayer. At 162–513 (RHHKMAYPPV…VDFPPKESSL (352 aa)) the chain is on the cytoplasmic side. The region spanning 192 to 485 (LQLLEVKARG…GERITQMQRL (294 aa)) is the Protein kinase domain. ATP is bound by residues 198–206 (KARGRFGCV) and lysine 219. The Proton acceptor role is filled by aspartate 322.

The protein belongs to the protein kinase superfamily. TKL Ser/Thr protein kinase family. TGFB receptor subfamily. In terms of assembly, part of a complex consisting of MAGI2/ARIP1, ACVR2A, ACVR1B and SMAD3. Interacts with MAGI2/ARIP1. Interacts with type I receptor ACVR1. Interacts with BMP7. Interacts with TSC22D1/TSC-22. Interacts with activin A/INHBA. It depends on Mg(2+) as a cofactor. Mn(2+) serves as cofactor. In terms of tissue distribution, brain, testis, intestine, liver and kidney.

It is found in the cell membrane. It carries out the reaction L-threonyl-[receptor-protein] + ATP = O-phospho-L-threonyl-[receptor-protein] + ADP + H(+). The catalysed reaction is L-seryl-[receptor-protein] + ATP = O-phospho-L-seryl-[receptor-protein] + ADP + H(+). Functionally, on ligand binding, forms a receptor complex consisting of two type II and two type I transmembrane serine/threonine kinases. Type II receptors phosphorylate and activate type I receptors which autophosphorylate, then bind and activate SMAD transcriptional regulators. Receptor for activin A, activin B and inhibin A. Mediates induction of adipogenesis by GDF6. In Mus musculus (Mouse), this protein is Activin receptor type-2A.